Reading from the N-terminus, the 151-residue chain is Small ribosomal subunit protein uS15 (151 aa).

It belongs to the universal ribosomal protein uS15 family.

This chain is Small ribosomal subunit protein uS15 (RPS13), found in Lumbricus rubellus (Humus earthworm).